A 1883-amino-acid polypeptide reads, in one-letter code: Endoribonuclease Dicer homolog 1 (1883 aa).

Disordered stretches follow at residues 71–97, 129–188, and 221–262; these read AESSPAPPPPPPPPLPEPVPVAPPELP, ARKE…DDRR, and RSGT…EKPV. Residues 75-96 are compositionally biased toward pro residues; that stretch reads PAPPPPPPPPLPEPVPVAPPEL. Composition is skewed to basic and acidic residues over residues 129-138 and 228-262; these read ARKEPRRESH and ESDREAKRARTQDGGSMEKKAEADRMGAAQREKPV. One can recognise a Helicase ATP-binding domain in the interval 274-413; that stretch reads VLEQAKSRNT…QEDCAIKIRN (140 aa). 287–294 provides a ligand contact to ATP; that stretch reads LETGAGKT. The DECH box motif lies at 358-361; it reads DECH. The tract at residues 577 to 604 is disordered; it reads KSETSDVEMQNTEKHNTNDLEEGELPDS. Residues 629-789 form the Helicase C-terminal domain; the sequence is LIKILLKYQH…RTDLSHLDGT (161 aa). Positions 817 to 912 constitute a Dicer dsRNA-binding fold domain; the sequence is AVGLIHFYCS…LPDRGSGEGE (96 aa). The segment at 901–928 is disordered; sequence TLLPDRGSGEGEKTEQNDEGEPLPGTAR. Basic and acidic residues predominate over residues 907–916; sequence GSGEGEKTEQ. One can recognise a PAZ domain in the interval 1163–1296; it reads HFSDYQNQGK…LPPELCLVHP (134 aa). 2 consecutive RNase III domains span residues 1320-1498 and 1538-1686; these read LAVQ…VAGG and FDTL…LDSG. Mg(2+) contacts are provided by glutamate 1576, aspartate 1672, and glutamate 1675. 2 consecutive DRBM domains span residues 1712–1775 and 1797–1872; these read HPVR…VLKE and FTRQ…LLNR.

Belongs to the helicase family. Dicer subfamily. In terms of assembly, may interact with ARGONAUTE1 or PINHEAD through their common PAZ domains. It depends on Mg(2+) as a cofactor. Mn(2+) serves as cofactor.

Its subcellular location is the nucleus. In terms of biological role, involved in the RNA silencing pathway. Cleaves double-stranded RNA to produce microRNAs (miRNAs) of 21-24 nucleotides which target the selective destruction of complementary RNAs. Regulates by this way the development of the plant. May not be involved in small interfering RNAs (siRNAs) production. This Oryza sativa subsp. japonica (Rice) protein is Endoribonuclease Dicer homolog 1 (DCL1).